Reading from the N-terminus, the 548-residue chain is DNA ligase (548 aa).

E244 provides a ligand contact to ATP. K246 functions as the N6-AMP-lysine intermediate in the catalytic mechanism. ATP-binding residues include R251, R266, E295, F334, R405, and K411.

This sequence belongs to the ATP-dependent DNA ligase family. Mg(2+) serves as cofactor.

The enzyme catalyses ATP + (deoxyribonucleotide)n-3'-hydroxyl + 5'-phospho-(deoxyribonucleotide)m = (deoxyribonucleotide)n+m + AMP + diphosphate.. Functionally, DNA ligase that seals nicks in double-stranded DNA during DNA replication, DNA recombination and DNA repair. This Methanoculleus marisnigri (strain ATCC 35101 / DSM 1498 / JR1) protein is DNA ligase.